Reading from the N-terminus, the 258-residue chain is Acyl-[acyl-carrier-protein]--UDP-N-acetylglucosamine O-acyltransferase (258 aa).

Belongs to the transferase hexapeptide repeat family. LpxA subfamily. As to quaternary structure, homotrimer.

It localises to the cytoplasm. It carries out the reaction a (3R)-hydroxyacyl-[ACP] + UDP-N-acetyl-alpha-D-glucosamine = a UDP-3-O-[(3R)-3-hydroxyacyl]-N-acetyl-alpha-D-glucosamine + holo-[ACP]. It participates in glycolipid biosynthesis; lipid IV(A) biosynthesis; lipid IV(A) from (3R)-3-hydroxytetradecanoyl-[acyl-carrier-protein] and UDP-N-acetyl-alpha-D-glucosamine: step 1/6. Its function is as follows. Involved in the biosynthesis of lipid A, a phosphorylated glycolipid that anchors the lipopolysaccharide to the outer membrane of the cell. In Pseudomonas entomophila (strain L48), this protein is Acyl-[acyl-carrier-protein]--UDP-N-acetylglucosamine O-acyltransferase.